Reading from the N-terminus, the 728-residue chain is Protein Hook homolog 1 (728 aa).

Met1 carries the post-translational modification N-acetylmethionine. The interval 1-555 is sufficient for interaction with microtubules; it reads MEDPQPLPQS…LKQKLEAHME (555 aa). A Calponin-homology (CH) domain is found at 12-128; sequence LPLCDSLIIW…RLLQLILGCA (117 aa). 2 coiled-coil regions span residues 168–443 and 477–658; these read PASD…LNQA and LRLQ…AKLR. A Phosphoserine modification is found at Ser235. The interval 481-510 is disordered; that stretch reads QEGTENERIEQLQEQLEQKHRKMNELETEQ. Positions 657 to 728 are sufficient for interaction with AKTIP and VPS18; that stretch reads LRDYEEKLIV…SVKVPAAASD (72 aa). Phosphoserine is present on residues Ser719 and Ser727.

This sequence belongs to the hook family. In terms of assembly, self-associates. Component of the FTS/Hook/FHIP complex (FHF complex), composed of AKTIP/FTS, FHIP1B, and one or more members of the Hook family of proteins HOOK1, HOOK2, and HOOK3. Interacts directly with AKTIP/FTS, HOOK2 and HOOK3. Associates with several subunits of the homotypic vesicular sorting complex (the HOPS complex) including VPS16, VPS18, VPS39 and VPS41; these interactions may be indirect. Interacts with CCDC181. Interacts (via coiled-coil region) with RIMBP3 (via C-terminus). Interacts with LRGUK (via guanylate kinase-like domain). Interacts with microtubules. May interacts with CLN3. Interacts with AP4M1; the interaction is direct, mediates the interaction between FTS-Hook-FHIP (FHF) complex and AP-4 and the perinuclear distribution of AP-4. In terms of tissue distribution, mainly expressed in testis.

It localises to the cytoplasm. The protein localises to the cytoskeleton. Its function is as follows. Component of the FTS/Hook/FHIP complex (FHF complex). The FHF complex may function to promote vesicle trafficking and/or fusion via the homotypic vesicular protein sorting complex (the HOPS complex). FHF complex promotes the distribution of AP-4 complex to the perinuclear area of the cell. Required for spermatid differentiation. Probably involved in the positioning of the microtubules of the manchette and the flagellum in relation to the membrane skeleton. The polypeptide is Protein Hook homolog 1 (Hook1) (Mus musculus (Mouse)).